The following is a 328-amino-acid chain: DNA polymerase IV (328 aa).

The region spanning 6–187 is the UmuC domain; it reads IIHIDMDYFF…LDIGDFPGVG (182 aa). Mg(2+)-binding residues include aspartate 10 and aspartate 105. Glutamate 106 is an active-site residue.

Belongs to the DNA polymerase type-Y family. As to quaternary structure, monomer. It depends on Mg(2+) as a cofactor.

It localises to the cytoplasm. The enzyme catalyses DNA(n) + a 2'-deoxyribonucleoside 5'-triphosphate = DNA(n+1) + diphosphate. Poorly processive, error-prone DNA polymerase involved in untargeted mutagenesis. Copies undamaged DNA at stalled replication forks, which arise in vivo from mismatched or misaligned primer ends. These misaligned primers can be extended by PolIV. Exhibits no 3'-5' exonuclease (proofreading) activity. May be involved in translesional synthesis, in conjunction with the beta clamp from PolIII. The chain is DNA polymerase IV from Staphylococcus aureus (strain bovine RF122 / ET3-1).